The chain runs to 225 residues: uncharacterized protein (225 aa).

This is an uncharacterized protein from Arabidopsis thaliana (Mouse-ear cress).